A 315-amino-acid chain; its full sequence is Ribonuclease Z (315 aa).

Residues His61, His63, Asp65, His66, His151, Asp219, and His278 each coordinate Zn(2+). Asp65 acts as the Proton acceptor in catalysis.

Belongs to the RNase Z family. Homodimer. Zn(2+) is required as a cofactor.

It carries out the reaction Endonucleolytic cleavage of RNA, removing extra 3' nucleotides from tRNA precursor, generating 3' termini of tRNAs. A 3'-hydroxy group is left at the tRNA terminus and a 5'-phosphoryl group is left at the trailer molecule.. In terms of biological role, zinc phosphodiesterase, which displays some tRNA 3'-processing endonuclease activity. Probably involved in tRNA maturation, by removing a 3'-trailer from precursor tRNA. The polypeptide is Ribonuclease Z (Clostridium botulinum (strain Eklund 17B / Type B)).